A 741-amino-acid chain; its full sequence is Phage T7 exclusion protein (741 aa).

The KAP NTPase domain maps to 27 to 334; that stretch reads FGNIAENISR…NSLIFLYPGM (308 aa).

Its function is as follows. Responsible for the exclusion of phage T7 by plasmid F. Growth of bacteriophage T7 is inhibited in cells of E.coli that carries the plasmid F. The polypeptide is Phage T7 exclusion protein (pifA) (Escherichia coli (strain K12)).